Here is an 845-residue protein sequence, read N- to C-terminus: MVTVMPLEMEKTISKLMFDFQRSSTSDDDSGCALEEYAWVPPGLKPEQVHQYYSCLPEEKVPYVNSAGEKLRIKQLLHQLPPHDNEVRYCNSLDEEEKRELKLFSNQRKRENLGRGNVRPFPVTMTGAICEQCGGQIKGGDIAVFASRAGHGICWHPPCFVCTVCNELLVDLIYFYQDGKIYCGRHHAECLKPRCAACDEIIFADECTEAEGRHWHMRHFCCFECETVLGGQRYIMKEGRPYCCHCFESLYAEYCDTCAQHIGIDQGQMTYDGQHWHATETCFCCAHCKKSLLGRPFLPKQGQIFCSRACSAGEDPNGSDSSDSAFQNARAKESRRSAKIGKNKGKTEEAMLNQHSQLQVSSNRLSADVDPLSVQMDLLSLSSQTPSLNRDPIWRSREEPFHYGNKMEQNQSQSPLQLLSQCNIRTSYSPGGQGAGAQPDMWAKHFSNPKRSSSMALKGHGGSFIQECREDYYPGRLMSQESYSDMSSQSFNETRGSIPVPKYEEEEEEEEGGISTQQCRPRRPLSSLKYTEDMTPTEQTPRGSMESLALSNATGLSAEGGAKRQEHLSRFSMPDLSKDSGMNVSEKLSNMGTLNSSMQFRSAESVRSLLSAQQYQEMEGNLHQLSNPLGYRDLQSHGRMHQSFDFDGGIASSKLPGQEGVHIQPMSERTRRRTTSRDDNRRFRPHRSRRSRRSRSDNALHLASEREVIARLKERPPLRAREDYDQFMRQRSFQESLGQGSRRDLYSQCPRTVSDLALQNAFGERWGPYFTEYDWCSTCSSSSESDNEGYFLGEPIPQPARLRYVTSDELLHKYSSYGVPKSSTLGGRGQLHSRKRQKSKNCIIS.

One can recognise a PET domain in the interval 18-126 (FDFQRSSTSD…NVRPFPVTMT (109 aa)). S92 is subject to Phosphoserine. 3 consecutive LIM zinc-binding domains span residues 128 to 193 (AICE…CLKP), 193 to 253 (PRCA…LYAE), and 253 to 317 (EYCD…EDPN). Disordered regions lie at residues 314-346 (EDPN…NKGK) and 483-546 (YSDM…GSME). Residues 318–327 (GSDSSDSAFQ) show a composition bias toward polar residues. 3 positions are modified to phosphoserine: S319, S321, and S322. Residues T535, T537, and T540 each carry the phosphothreonine modification. Phosphoserine is present on residues S544 and S547. The segment at 558 to 581 (AEGGAKRQEHLSRFSMPDLSKDSG) is disordered. Residues S608 and S643 each carry the phosphoserine modification. The disordered stretch occupies residues 642–700 (QSFDFDGGIASSKLPGQEGVHIQPMSERTRRRTTSRDDNRRFRPHRSRRSRRSRSDNAL). Basic residues predominate over residues 683-693 (FRPHRSRRSRR). Phosphoserine is present on S732. The interval 823 to 845 (STLGGRGQLHSRKRQKSKNCIIS) is disordered. At C842 the chain carries Cysteine methyl ester. C842 carries the S-farnesyl cysteine lipid modification. The propeptide at 843–845 (IIS) is removed in mature form.

It belongs to the prickle / espinas / testin family. As to expression, expressed in the hippocampus and cerebral cortex.

Its subcellular location is the nucleus membrane. This Mus musculus (Mouse) protein is Prickle-like protein 2 (Prickle2).